A 198-amino-acid chain; its full sequence is Holliday junction branch migration complex subunit RuvA (198 aa).

Positions 1-63 (MYSYIIGVIT…EDASILYGFS (63 aa)) are domain I. Positions 64 to 142 (SQKERELFNL…KDFVPSEKPV (79 aa)) are domain II. The tract at residues 143-153 (NKEVKRSNDSE) is flexible linker. Residues 153–198 (EFAREALLQLGYFKNDVDAFIENTDISGLSIEDIMKKAMKSLDSSR) are domain III.

This sequence belongs to the RuvA family. In terms of assembly, homotetramer. Forms an RuvA(8)-RuvB(12)-Holliday junction (HJ) complex. HJ DNA is sandwiched between 2 RuvA tetramers; dsDNA enters through RuvA and exits via RuvB. An RuvB hexamer assembles on each DNA strand where it exits the tetramer. Each RuvB hexamer is contacted by two RuvA subunits (via domain III) on 2 adjacent RuvB subunits; this complex drives branch migration. In the full resolvosome a probable DNA-RuvA(4)-RuvB(12)-RuvC(2) complex forms which resolves the HJ.

It localises to the cytoplasm. Functionally, the RuvA-RuvB-RuvC complex processes Holliday junction (HJ) DNA during genetic recombination and DNA repair, while the RuvA-RuvB complex plays an important role in the rescue of blocked DNA replication forks via replication fork reversal (RFR). RuvA specifically binds to HJ cruciform DNA, conferring on it an open structure. The RuvB hexamer acts as an ATP-dependent pump, pulling dsDNA into and through the RuvAB complex. HJ branch migration allows RuvC to scan DNA until it finds its consensus sequence, where it cleaves and resolves the cruciform DNA. The protein is Holliday junction branch migration complex subunit RuvA of Finegoldia magna (strain ATCC 29328 / DSM 20472 / WAL 2508) (Peptostreptococcus magnus).